The primary structure comprises 283 residues: NADPH-dependent 3-dehydrocapnine reductase (283 aa).

Y153 acts as the Proton acceptor in catalysis.

It belongs to the short-chain dehydrogenases/reductases (SDR) family.

The catalysed reaction is 3-oxocapnine + NADPH + H(+) = capnine + NADP(+). It functions in the pathway lipid metabolism. In terms of biological role, reductase involved in the biosynthesis of capnine, a sulfonolipid present in the outer membrane of gliding Bacteroidetes and essential for gliding motility. Catalyzes the reduction of 3-dehydrocapnine to capnine. The sequence is that of NADPH-dependent 3-dehydrocapnine reductase from Ornithobacterium rhinotracheale.